A 443-amino-acid polypeptide reads, in one-letter code: Ribosomal protein uS12 methylthiotransferase RimO (443 aa).

One can recognise an MTTase N-terminal domain in the interval 5–116; that stretch reads PTIAINHLGC…IVDIIRRTEQ (112 aa). The [4Fe-4S] cluster site is built by cysteine 14, cysteine 50, cysteine 79, cysteine 154, cysteine 158, and cysteine 161. One can recognise a Radical SAM core domain in the interval 140 to 369; it reads TTNEAIAYLR…MALQQPISAQ (230 aa). Residues 372 to 438 form the TRAM domain; the sequence is AACLGQTLDV…DYDLYGMTAE (67 aa).

The protein belongs to the methylthiotransferase family. RimO subfamily. [4Fe-4S] cluster serves as cofactor.

It localises to the cytoplasm. The catalysed reaction is L-aspartate(89)-[ribosomal protein uS12]-hydrogen + (sulfur carrier)-SH + AH2 + 2 S-adenosyl-L-methionine = 3-methylsulfanyl-L-aspartate(89)-[ribosomal protein uS12]-hydrogen + (sulfur carrier)-H + 5'-deoxyadenosine + L-methionine + A + S-adenosyl-L-homocysteine + 2 H(+). Its function is as follows. Catalyzes the methylthiolation of an aspartic acid residue of ribosomal protein uS12. This Synechocystis sp. (strain ATCC 27184 / PCC 6803 / Kazusa) protein is Ribosomal protein uS12 methylthiotransferase RimO.